A 155-amino-acid chain; its full sequence is Ribosomal RNA large subunit methyltransferase H (155 aa).

Residues leucine 72, glycine 103, and 122-127 (LSPLTL) each bind S-adenosyl-L-methionine.

It belongs to the RNA methyltransferase RlmH family. As to quaternary structure, homodimer.

The protein localises to the cytoplasm. It carries out the reaction pseudouridine(1915) in 23S rRNA + S-adenosyl-L-methionine = N(3)-methylpseudouridine(1915) in 23S rRNA + S-adenosyl-L-homocysteine + H(+). Specifically methylates the pseudouridine at position 1915 (m3Psi1915) in 23S rRNA. The sequence is that of Ribosomal RNA large subunit methyltransferase H from Aeromonas hydrophila subsp. hydrophila (strain ATCC 7966 / DSM 30187 / BCRC 13018 / CCUG 14551 / JCM 1027 / KCTC 2358 / NCIMB 9240 / NCTC 8049).